The following is a 661-amino-acid chain: Pentatricopeptide repeat-containing protein At5g66631 (661 aa).

PPR repeat units follow at residues V139–K173, C176–P210, N211–R245, T246–P280, D410–L444, P445–L475, L484–P518, D519–P553, and D554–P588.

This sequence belongs to the PPR family. P subfamily.

The sequence is that of Pentatricopeptide repeat-containing protein At5g66631 from Arabidopsis thaliana (Mouse-ear cress).